An 872-amino-acid chain; its full sequence is Cellulose synthase catalytic subunit [UDP-forming] (872 aa).

The next 4 membrane-spanning stretches (helical) occupy residues Ser-30–Leu-50, Ile-151–Phe-171, Pro-173–Met-193, and Leu-230–Gly-250. Residues Leu-271–Val-364 are catalytic subdomain A. The active site involves Asp-313. 2 residues coordinate substrate: Asp-360 and Asp-362. Residues Lys-441–Met-501 form a catalytic subdomain B region. Asp-457 is an active-site residue. 5 consecutive transmembrane segments (helical) span residues Val-525–Leu-545, Phe-547–Leu-567, Ile-592–Pro-612, Ile-640–Gly-660, and Val-668–Val-688. The PilZ domain occupies Gln-694 to Phe-790. A helical membrane pass occupies residues Ser-833–Pro-853.

Belongs to the glycosyltransferase 2 family. The cofactor is Mg(2+).

It is found in the cell inner membrane. It carries out the reaction [(1-&gt;4)-beta-D-glucosyl](n) + UDP-alpha-D-glucose = [(1-&gt;4)-beta-D-glucosyl](n+1) + UDP + H(+). The protein operates within glycan metabolism; bacterial cellulose biosynthesis. With respect to regulation, activated by bis-(3'-5') cyclic diguanylic acid (c-di-GMP). Its function is as follows. Catalytic subunit of cellulose synthase. It polymerizes uridine 5'-diphosphate glucose to cellulose, which is produced as an extracellular component for mechanical and chemical protection at the onset of the stationary phase, when the cells exhibit multicellular behavior (rdar morphotype). Coexpression of cellulose and thin aggregative fimbriae (curli fimbrae or fibers) leads to a hydrophobic network with tightly packed cells embedded in a highly inert matrix that confers cohesion, elasticity and tissue-like properties to colonies. In Escherichia coli (strain K12), this protein is Cellulose synthase catalytic subunit [UDP-forming] (bcsA).